The following is a 366-amino-acid chain: Methylthioribose-1-phosphate isomerase (366 aa).

Residue aspartate 260 is the Proton donor of the active site.

The protein belongs to the eIF-2B alpha/beta/delta subunits family. MtnA subfamily.

Its subcellular location is the cytoplasm. It localises to the nucleus. It carries out the reaction 5-(methylsulfanyl)-alpha-D-ribose 1-phosphate = 5-(methylsulfanyl)-D-ribulose 1-phosphate. It functions in the pathway amino-acid biosynthesis; L-methionine biosynthesis via salvage pathway; L-methionine from S-methyl-5-thio-alpha-D-ribose 1-phosphate: step 1/6. Catalyzes the interconversion of methylthioribose-1-phosphate (MTR-1-P) into methylthioribulose-1-phosphate (MTRu-1-P). The polypeptide is Methylthioribose-1-phosphate isomerase (Caenorhabditis elegans).